We begin with the raw amino-acid sequence, 140 residues long: Nucleoside diphosphate kinase (140 aa).

ATP contacts are provided by lysine 11, phenylalanine 59, arginine 87, threonine 93, arginine 104, and asparagine 114. The active-site Pros-phosphohistidine intermediate is the histidine 117.

Belongs to the NDK family. As to quaternary structure, homotetramer. The cofactor is Mg(2+).

It is found in the cytoplasm. The enzyme catalyses a 2'-deoxyribonucleoside 5'-diphosphate + ATP = a 2'-deoxyribonucleoside 5'-triphosphate + ADP. It carries out the reaction a ribonucleoside 5'-diphosphate + ATP = a ribonucleoside 5'-triphosphate + ADP. Functionally, major role in the synthesis of nucleoside triphosphates other than ATP. The ATP gamma phosphate is transferred to the NDP beta phosphate via a ping-pong mechanism, using a phosphorylated active-site intermediate. This is Nucleoside diphosphate kinase from Nitrobacter hamburgensis (strain DSM 10229 / NCIMB 13809 / X14).